The primary structure comprises 501 residues: GDP-fucose protein O-fucosyltransferase 4 (501 aa).

Over 1 to 10 (MLLQMAGRGK) the chain is Cytoplasmic. Residues 11 to 31 (MVPCVCLGLLGVLCWVWVSFA) form a helical; Signal-anchor for type II membrane protein membrane-spanning segment. The Lumenal segment spans residues 32–501 (SFPDEQLSLG…MAVRRARGKN (470 aa)). Residue Asn-173 is glycosylated (N-linked (GlcNAc...) asparagine). Cysteines 396 and 399 form a disulfide. N-linked (GlcNAc...) asparagine glycosylation is found at Asn-428 and Asn-478.

It belongs to the glycosyltransferase 10 family.

Its subcellular location is the endoplasmic reticulum membrane. It catalyses the reaction L-threonyl-[protein] + GDP-beta-L-fucose = 3-O-(alpha-L-fucosyl)-L-threonyl-[protein] + GDP + H(+). It carries out the reaction L-seryl-[protein] + GDP-beta-L-fucose = 3-O-(alpha-L-fucosyl)-L-seryl-[protein] + GDP + H(+). It participates in protein modification; protein glycosylation. Functionally, protein O-fucosyltransferase that specifically catalyzes O-fucosylation of serine or threonine residues in EMI domains of target proteins. Attaches fucose through an O-glycosidic linkage. O-fucosylation of EMI domain-containing proteins may be required for facilitating protein folding and secretion. This is GDP-fucose protein O-fucosyltransferase 4 (fut11) from Takifugu rubripes (Japanese pufferfish).